Reading from the N-terminus, the 457-residue chain is Beta-1,4-mannosyltransferase egh (457 aa).

The next 6 helical transmembrane spans lie at 8-28, 35-55, 57-77, 346-366, 378-398, and 415-435; these read LLHC…SGGI, FTLV…LYLL, FLTL…VFYN, LLGI…NIIF, VDFV…FGVI, and VLGA…AVIW.

It belongs to the glycosyltransferase 2 family.

The protein localises to the membrane. Functionally, glycosyltransferase with a proposed role in glycosphingolipid biosynthesis. Neurogenic protein implicated in epithelial development. Critical component of a differential oocyte-follicle cell adhesive system. The sequence is that of Beta-1,4-mannosyltransferase egh (egh) from Drosophila melanogaster (Fruit fly).